The following is a 148-amino-acid chain: Male-specific protein scotti (148 aa).

The disordered stretch occupies residues 56-78 (PQEPPLGVFPAQGGPNGPPRLRK). A glycan (N-linked (GlcNAc...) asparagine) is linked at Asn129.

It belongs to the male-specific scotti family.

Functionally, post-meiotically transcribed gene that has a role in late spermiogenesis; required for actin cone progression during spermatid individualization. This Drosophila sechellia (Fruit fly) protein is Male-specific protein scotti.